Consider the following 310-residue polypeptide: MVVSEKSKILIIGGTGYIGKYLVETSAKSGHPTFVLIRESTLVNPEKSKLIDTFKSYGVTLLFGDISNQESLLKAIKQVDVVISTVGGQQFADQVNIIKAIKEAGNIKRFLPSEFGFDVDHAHAIEPAASLFALKVKIRRMIEAEGIPYTYVICNWFADFFLPNLGQLEAKTPPRDKVVIFGDGNPKAIYVKEEDIATYTMKAVDDPRTLNKTLHMRPPANILSFNEIVSLWEEKIGKTLEKLYLSEEDILHIVQEGPMPLRVNLAICHSVFVNGDSANFEIQPSTGVEATELYPKVKYTTVDEYYNKFV.

NADP(+) contacts are provided by residues 13–19 (GGTGYIG), arginine 38, and lysine 47. Lysine 135 (proton acceptor) is an active-site residue. Residue arginine 139 participates in NADP(+) binding.

The protein belongs to the NmrA-type oxidoreductase family. Isoflavone reductase subfamily. In terms of assembly, monomer. In terms of tissue distribution, expressed in roots.

The protein resides in the cytoplasm. The protein operates within alkaloid biosynthesis; nicotine biosynthesis. Functionally, involved in the biosynthesis of pyridine alkaloid natural products, leading mainly to the production of anabasine, anatabine, nicotine and nornicotine, effective deterrents against herbivores with antiparasitic and pesticide properties (neurotoxins); nornicotine serves as the precursor in the synthesis of the carcinogen compound N'-nitrosonornicotine (NNN). Reductase that may be involved in a late step of tobacco alkaloid biosynthesis. Maybe involved in either the formation of a nicotinic acid-derived precursor or the final condensation reaction of tobacco alkaloids. The protein is Isoflavone reductase homolog A622-like of Nicotiana tabacum (Common tobacco).